The following is a 792-amino-acid chain: Zinc finger CCCH domain-containing protein 11A (792 aa).

C3H1-type zinc fingers lie at residues 2–29 (PNQG…HCEA), 31–57 (LGNE…HMEI), and 60–87 (KRSE…HTRS). 3 disordered regions span residues 103–191 (PTVP…VHNG), 223–331 (KKMK…KAGE), and 345–443 (ASQK…RSMQ). Phosphoserine is present on Ser-108. Glycyl lysine isopeptide (Lys-Gly) (interchain with G-Cter in SUMO2) cross-links involve residues Lys-114 and Lys-124. Residues 115-135 (TSQLTVQQSKLSVQSNPSPQL) show a composition bias toward polar residues. Ser-132 bears the Phosphoserine mark. Lys-140 participates in a covalent cross-link: Glycyl lysine isopeptide (Lys-Gly) (interchain with G-Cter in SUMO2). Phosphoserine is present on residues Ser-149, Ser-171, and Ser-289. The segment covering 160-175 (ADDDEDDDDQFSEEGD) has biased composition (acidic residues). Composition is skewed to basic and acidic residues over residues 308-331 (KKVE…KAGE) and 345-360 (ASQK…KAEE). Positions 338–360 (EEILLERASQKRGELQTKLKAEE) form a coiled coil. Residue Ser-346 is modified to Phosphoserine. Low complexity predominate over residues 367–376 (SPSGTKSSSS). 2 stretches are compositionally biased toward basic and acidic residues: residues 393–405 (QQEM…KKDT) and 431–443 (QPEE…RSMQ). Residue Lys-454 forms a Glycyl lysine isopeptide (Lys-Gly) (interchain with G-Cter in SUMO2) linkage. Disordered stretches follow at residues 458-531 (ALRV…PTKL) and 545-571 (QRLQ…ASSY). Positions 461–473 (VQQSSESSGNSRP) are enriched in polar residues. Basic and acidic residues-rich tracts occupy residues 492-501 (GVKEEKKCGL) and 545-558 (QRLQ…KEKA). Lys-601 participates in a covalent cross-link: Glycyl lysine isopeptide (Lys-Gly) (interchain with G-Cter in SUMO2). A disordered region spans residues 690 to 750 (LSEDKPVTMS…SASTGKPPLS (61 aa)). Polar residues predominate over residues 698–715 (MSETENPKDSSVLSSAQA). Over residues 717–730 (SEPLLPEGSGPSSS) the composition is skewed to low complexity.

Interacts with TREX complex components THOC2, DDX39 and POLDIP3; the interactions are ATP-dependent. Interacts with PABPN1; this interaction retains ZC3H11A in nuclear speckles. Interacts with KPNA3.

It is found in the nucleus speckle. Functionally, through its association with TREX complex components, may participate in the export and post-transcriptional coordination of selected mRNA transcripts, including those required to maintain the metabolic processes in embryonic cells. Binds RNA. In Mus musculus (Mouse), this protein is Zinc finger CCCH domain-containing protein 11A (Zc3h11a).